Here is a 357-residue protein sequence, read N- to C-terminus: Alanine racemase (357 aa).

The active-site Proton acceptor; specific for D-alanine is the lysine 35. Lysine 35 is subject to N6-(pyridoxal phosphate)lysine. A substrate-binding site is contributed by arginine 131. Residue tyrosine 256 is the Proton acceptor; specific for L-alanine of the active site. Methionine 304 provides a ligand contact to substrate.

The protein belongs to the alanine racemase family. Pyridoxal 5'-phosphate is required as a cofactor.

It catalyses the reaction L-alanine = D-alanine. Its pathway is amino-acid biosynthesis; D-alanine biosynthesis; D-alanine from L-alanine: step 1/1. Its function is as follows. Catalyzes the interconversion of L-alanine and D-alanine. May also act on other amino acids. This is Alanine racemase (alr) from Legionella pneumophila (strain Corby).